A 469-amino-acid chain; its full sequence is Uronate isomerase (469 aa).

This sequence belongs to the metallo-dependent hydrolases superfamily. Uronate isomerase family.

It carries out the reaction D-glucuronate = D-fructuronate. It catalyses the reaction aldehydo-D-galacturonate = keto-D-tagaturonate. It functions in the pathway carbohydrate metabolism; pentose and glucuronate interconversion. This Pectobacterium atrosepticum (strain SCRI 1043 / ATCC BAA-672) (Erwinia carotovora subsp. atroseptica) protein is Uronate isomerase.